Reading from the N-terminus, the 634-residue chain is Nucleoside triphosphatase I (634 aa).

Residues 41-203 (FLGLDSMNSL…ALLVNLLRPG (163 aa)) form the Helicase ATP-binding domain. Residue 54–61 (QETGVGKT) coordinates ATP. Residues 140–143 (DECH) carry the DEXH box motif. Residues 355–531 (SLYQALYEHS…EFSQLYRVLK (177 aa)) enclose the Helicase C-terminal domain. Positions 456–523 (DIFILDMTWN…EIIQNKAREF (68 aa)) are binding to the cap-specific mRNA (nucleoside-2'-O-)-methyltransferase.

Belongs to the helicase family. NPH I subfamily. Monomer. Interacts (via C-terminus) with RAP94 (via N-terminus). Interacts with the cap-specific mRNA (nucleoside-2'-O-)-methyltransferase.

Its subcellular location is the virion. It carries out the reaction a ribonucleoside 5'-triphosphate + H2O = a ribonucleoside 5'-diphosphate + phosphate + H(+). Its function is as follows. DNA-dependent ATPase required for providing the needed energy to achieve the termination of early transcripts. Acts in concert with the RAP94 subunit of the virion RNA polymerase and the capping enzyme/VTF to catalyze release of UUUUUNU-containing nascent RNA from the elongation complex. NPH-I must bind ssDNA in order to exhibit ATPase activity. The polypeptide is Nucleoside triphosphatase I (NPH1) (Homo sapiens (Human)).